The primary structure comprises 524 residues: Ribose import ATP-binding protein RbsA (524 aa).

2 consecutive ABC transporter domains span residues Leu17–Ile252 and Ile263–Val505. Gly49–Ser56 provides a ligand contact to ATP.

The protein belongs to the ABC transporter superfamily. Ribose importer (TC 3.A.1.2.1) family. As to quaternary structure, the complex is composed of an ATP-binding protein (RbsA), two transmembrane proteins (RbsC) and a solute-binding protein (RbsB).

It is found in the cell membrane. The catalysed reaction is D-ribose(out) + ATP + H2O = D-ribose(in) + ADP + phosphate + H(+). Its function is as follows. Part of the ABC transporter complex RbsABC involved in ribose import. Responsible for energy coupling to the transport system. The protein is Ribose import ATP-binding protein RbsA of Corynebacterium glutamicum (strain ATCC 13032 / DSM 20300 / JCM 1318 / BCRC 11384 / CCUG 27702 / LMG 3730 / NBRC 12168 / NCIMB 10025 / NRRL B-2784 / 534).